We begin with the raw amino-acid sequence, 163 residues long: uncharacterized protein (163 aa).

This is an uncharacterized protein from Homo sapiens (Human).